The following is a 314-amino-acid chain: 1,4-dihydroxy-2-naphthoyl-CoA synthase (314 aa).

Substrate contacts are provided by residues Arg-58, 103 to 107, Tyr-115, 157 to 161, Thr-184, Ser-190, Tyr-287, and Lys-302; these read SGGDQ and WAAGG.

The protein belongs to the enoyl-CoA hydratase/isomerase family. MenB subfamily.

It catalyses the reaction 2-succinylbenzoyl-CoA + H(+) = 1,4-dihydroxy-2-naphthoyl-CoA + H2O. The protein operates within quinol/quinone metabolism; 1,4-dihydroxy-2-naphthoate biosynthesis; 1,4-dihydroxy-2-naphthoate from chorismate: step 6/7. It participates in quinol/quinone metabolism; menaquinone biosynthesis. In terms of biological role, converts o-succinylbenzoyl-CoA (OSB-CoA) to 1,4-dihydroxy-2-naphthoyl-CoA (DHNA-CoA). This is 1,4-dihydroxy-2-naphthoyl-CoA synthase from Mycobacterium tuberculosis (strain CDC 1551 / Oshkosh).